Here is a 466-residue protein sequence, read N- to C-terminus: Cysteine--tRNA ligase (466 aa).

Residue cysteine 28 participates in Zn(2+) binding. A 'HIGH' region motif is present at residues 30-40 (PTVYNFFHIGN). 3 residues coordinate Zn(2+): cysteine 208, histidine 233, and glutamate 237. The 'KMSKS' region signature appears at 265–269 (KMSKS). Position 268 (lysine 268) interacts with ATP.

It belongs to the class-I aminoacyl-tRNA synthetase family. As to quaternary structure, monomer. Zn(2+) is required as a cofactor.

The protein resides in the cytoplasm. The catalysed reaction is tRNA(Cys) + L-cysteine + ATP = L-cysteinyl-tRNA(Cys) + AMP + diphosphate. The chain is Cysteine--tRNA ligase from Clostridium perfringens (strain ATCC 13124 / DSM 756 / JCM 1290 / NCIMB 6125 / NCTC 8237 / Type A).